The following is an 877-amino-acid chain: Leucine--tRNA ligase (877 aa).

Residues 43–53 (PYPSGRIHMGH) carry the 'HIGH' region motif. The short motif at 628–632 (KMSKS) is the 'KMSKS' region element. Lys-631 contacts ATP.

This sequence belongs to the class-I aminoacyl-tRNA synthetase family.

It is found in the cytoplasm. The catalysed reaction is tRNA(Leu) + L-leucine + ATP = L-leucyl-tRNA(Leu) + AMP + diphosphate. The chain is Leucine--tRNA ligase from Brucella suis biovar 1 (strain 1330).